We begin with the raw amino-acid sequence, 607 residues long: Matrix metalloproteinase-16 (607 aa).

The signal sequence occupies residues 1–31 (MILLAFSSGRRLDFVHRSGVFFFQTLLWILC). Positions 32-119 (ATVCGTEQYF…SSKFNIRRKR (88 aa)) are excised as a propeptide. N-linked (GlcNAc...) asparagine glycosylation occurs at Asn-83. The Cysteine switch motif lies at 99–106 (PRCGVPDQ). Cys-101 is a binding site for Zn(2+). The Extracellular segment spans residues 120–564 (YALTGQKWQH…LDNTASTVKA (445 aa)). Position 183 (Asp-183) interacts with Ca(2+). Residues His-193 and Asp-195 each coordinate Zn(2+). Ca(2+)-binding residues include Asp-200, Gly-201, Gly-203, and Phe-205. His-208 is a Zn(2+) binding site. Positions 215, 217, and 219 each coordinate Ca(2+). Zn(2+) is bound at residue His-221. Residues Asp-223 and Glu-226 each contribute to the Ca(2+) site. Zn(2+) is bound at residue His-246. Residue Glu-247 is part of the active site. Zn(2+)-binding residues include His-250 and His-256. The interval 281–340 (DDLQGIQKIYGPPDKIPPPTRPLPTVPPHRSVPPADPRKNDRPKPPRPPTGRPSYPGAKP) is disordered. Pro residues predominate over residues 294–315 (DKIPPPTRPLPTVPPHRSVPPA). 4 Hemopexin repeats span residues 340–388 (PNIC…WRGL), 389–434 (PPSI…GNGI), 436–484 (PHGI…KGIP), and 485–532 (ESPQ…FMGC). A disulfide bridge links Cys-343 with Cys-532. Residues 565–585 (IAIVIPCILALCLLVLVYTVF) form a helical membrane-spanning segment. The Cytoplasmic segment spans residues 586-607 (QFKRKGTPRHILYCKRSMQEWV).

This sequence belongs to the peptidase M10A family. Interacts with CSPG4 through CSPG4 chondroitin sulfate glycosaminoglycan. Zn(2+) serves as cofactor. The cofactor is Ca(2+). Post-translationally, the precursor is cleaved by a furin endopeptidase. As to expression, strongly expressed in the lung, brain and smooth muscle cells. Weakly detectable in the spleen and liver and indetectable in the heart, skeletal muscle and kidney.

Its subcellular location is the cell membrane. It localises to the secreted. It is found in the extracellular space. The protein resides in the extracellular matrix. In terms of biological role, endopeptidase that degrades various components of the extracellular matrix, such as collagen type III and fibronectin. Activates progelatinase A. Involved in the matrix remodeling of blood vessels. The short isoform efficiently converts progelatinase A to the intermediate form but not to the mature one. It has no effect on type I, II, IV and V collagen. However, upon interaction with CSPG4, it may be involved in degradation and invasion of type I collagen by melanoma cells. The chain is Matrix metalloproteinase-16 (Mmp16) from Rattus norvegicus (Rat).